Here is a 117-residue protein sequence, read N- to C-terminus: Regulator of ribonuclease activity B (117 aa).

It belongs to the RraB family. In terms of assembly, interacts with the C-terminal region of Rne.

The protein localises to the cytoplasm. Its function is as follows. Globally modulates RNA abundance by binding to RNase E (Rne) and regulating its endonucleolytic activity. Can modulate Rne action in a substrate-dependent manner by altering the composition of the degradosome. The polypeptide is Regulator of ribonuclease activity B (Pseudoalteromonas atlantica (strain T6c / ATCC BAA-1087)).